A 315-amino-acid chain; its full sequence is Ribose-phosphate pyrophosphokinase (315 aa).

ATP is bound by residues 37 to 39 and 96 to 97; these read DGE and RQ. Residues His131 and Asp170 each contribute to the Mg(2+) site. Residue Lys194 is part of the active site. D-ribose 5-phosphate is bound by residues Arg196, Asp220, and 224-228; that span reads DTGGT.

This sequence belongs to the ribose-phosphate pyrophosphokinase family. Class I subfamily. As to quaternary structure, homohexamer. The cofactor is Mg(2+).

It localises to the cytoplasm. It carries out the reaction D-ribose 5-phosphate + ATP = 5-phospho-alpha-D-ribose 1-diphosphate + AMP + H(+). It functions in the pathway metabolic intermediate biosynthesis; 5-phospho-alpha-D-ribose 1-diphosphate biosynthesis; 5-phospho-alpha-D-ribose 1-diphosphate from D-ribose 5-phosphate (route I): step 1/1. In terms of biological role, involved in the biosynthesis of the central metabolite phospho-alpha-D-ribosyl-1-pyrophosphate (PRPP) via the transfer of pyrophosphoryl group from ATP to 1-hydroxyl of ribose-5-phosphate (Rib-5-P). The polypeptide is Ribose-phosphate pyrophosphokinase (Buchnera aphidicola subsp. Schizaphis graminum (strain Sg)).